A 991-amino-acid chain; its full sequence is UvrABC system protein A (991 aa).

Residue 48-55 (GLSGSGKS) coordinates ATP. 2 consecutive ABC transporter domains span residues 345–624 (WAKS…PKSL) and 644–972 (NHRR…KFLE). 676 to 683 (GVSGGGKS) contributes to the ATP binding site. Residues 775–801 (CEACQGDGVIKIEMHFLPDVYVTCDVC) form a C4-type zinc finger.

This sequence belongs to the ABC transporter superfamily. UvrA family. In terms of assembly, forms a heterotetramer with UvrB during the search for lesions.

Its subcellular location is the cytoplasm. Its function is as follows. The UvrABC repair system catalyzes the recognition and processing of DNA lesions. UvrA is an ATPase and a DNA-binding protein. A damage recognition complex composed of 2 UvrA and 2 UvrB subunits scans DNA for abnormalities. When the presence of a lesion has been verified by UvrB, the UvrA molecules dissociate. The chain is UvrABC system protein A from Bradyrhizobium diazoefficiens (strain JCM 10833 / BCRC 13528 / IAM 13628 / NBRC 14792 / USDA 110).